The chain runs to 688 residues: T-box transcription factor TBX2-A (688 aa).

The segment at residues 104-277 (LWDQFHKIGT…NNPFAKGFRD (174 aa)) is a DNA-binding region (T-box). Disordered regions lie at residues 301-436 (CKAD…GSLS) and 606-688 (PSTN…ETPK). Basic and acidic residues-rich tracts occupy residues 340 to 361 (NNRE…EIRS), 378 to 403 (RLED…KDGS), and 412 to 430 (SLEK…KSDP). The span at 621–636 (PGSESSKPGSSRESSP) shows a compositional bias: low complexity. Residues 655–679 (ASMKDSINELQNIQRLVSGLESQRE) are a coiled coil. A compositionally biased stretch (basic and acidic residues) spans 676–688 (SQREISPGRETPK).

In terms of assembly, binds DNA as a monomer.

It is found in the nucleus. Transcription factor which acts as a transcriptional repressor. May also function as a transcriptional activator. Binds to the palindromic T site 5'-TTCACACCTAGGTGTGAA-3' DNA sequence, or a half-site, which are present in the regulatory region of several genes. The protein is T-box transcription factor TBX2-A (tbx2-a) of Xenopus laevis (African clawed frog).